The following is a 353-amino-acid chain: Photosystem II protein D1 (353 aa).

T2 is subject to N-acetylthreonine. T2 carries the phosphothreonine modification. Transmembrane regions (helical) follow at residues 29-46 (YIGW…TATS), 118-133 (HFFL…EWEL), and 142-156 (WIAV…AATA). H118 is a binding site for chlorophyll a. Residue Y126 coordinates pheophytin a. Residues D170 and E189 each contribute to the [CaMn4O5] cluster site. A helical transmembrane segment spans residues 197–218 (FHMLGVAGVFGGSLFSAMHGSL). H198 contacts chlorophyll a. A quinone contacts are provided by residues H215 and 264–265 (SF). H215 is a binding site for Fe cation. H272 is a Fe cation binding site. A helical membrane pass occupies residues 274 to 288 (FLAAWPVVGIWFTAL). [CaMn4O5] cluster contacts are provided by H332, E333, D342, and A344. The propeptide occupies 345–353 (SVEAPSVNG).

This sequence belongs to the reaction center PufL/M/PsbA/D family. PSII is composed of 1 copy each of membrane proteins PsbA, PsbB, PsbC, PsbD, PsbE, PsbF, PsbH, PsbI, PsbJ, PsbK, PsbL, PsbM, PsbT, PsbX, PsbY, PsbZ, Psb30/Ycf12, at least 3 peripheral proteins of the oxygen-evolving complex and a large number of cofactors. It forms dimeric complexes. The D1/D2 heterodimer binds P680, chlorophylls that are the primary electron donor of PSII, and subsequent electron acceptors. It shares a non-heme iron and each subunit binds pheophytin, quinone, additional chlorophylls, carotenoids and lipids. D1 provides most of the ligands for the Mn4-Ca-O5 cluster of the oxygen-evolving complex (OEC). There is also a Cl(-1) ion associated with D1 and D2, which is required for oxygen evolution. The PSII complex binds additional chlorophylls, carotenoids and specific lipids. is required as a cofactor. Post-translationally, tyr-161 forms a radical intermediate that is referred to as redox-active TyrZ, YZ or Y-Z. C-terminally processed by CTPA; processing is essential to allow assembly of the oxygen-evolving complex and thus photosynthetic growth.

The protein localises to the plastid. It is found in the chloroplast thylakoid membrane. The enzyme catalyses 2 a plastoquinone + 4 hnu + 2 H2O = 2 a plastoquinol + O2. Photosystem II (PSII) is a light-driven water:plastoquinone oxidoreductase that uses light energy to abstract electrons from H(2)O, generating O(2) and a proton gradient subsequently used for ATP formation. It consists of a core antenna complex that captures photons, and an electron transfer chain that converts photonic excitation into a charge separation. The D1/D2 (PsbA/PsbD) reaction center heterodimer binds P680, the primary electron donor of PSII as well as several subsequent electron acceptors. In Chaetosphaeridium globosum (Charophycean green alga), this protein is Photosystem II protein D1.